Reading from the N-terminus, the 201-residue chain is uncharacterized protein (201 aa).

This is an uncharacterized protein from Cestrum yellow leaf curling virus (CmYLCV).